The chain runs to 732 residues: Polyribonucleotide nucleotidyltransferase (732 aa).

The Mg(2+) site is built by Asp-503 and Asp-509. The KH domain maps to 570–629 (PRLTAIQVPVESIGLIIGKGGETIRSITEETGAEINIEDDGTVTIACSSNEGTKGAVEII). In terms of domain architecture, S1 motif spans 639–713 (GTVYIGKVRD…GKTRFALSIK (75 aa)).

It belongs to the polyribonucleotide nucleotidyltransferase family. Mg(2+) is required as a cofactor.

The protein resides in the cytoplasm. It catalyses the reaction RNA(n+1) + phosphate = RNA(n) + a ribonucleoside 5'-diphosphate. In terms of biological role, involved in mRNA degradation. Catalyzes the phosphorolysis of single-stranded polyribonucleotides processively in the 3'- to 5'-direction. This is Polyribonucleotide nucleotidyltransferase from Chlorobium phaeovibrioides (strain DSM 265 / 1930) (Prosthecochloris vibrioformis (strain DSM 265)).